A 437-amino-acid chain; its full sequence is Serine hydroxymethyltransferase (437 aa).

Residues Leu130 and 134–136 contribute to the (6S)-5,6,7,8-tetrahydrofolate site; that span reads GHL. N6-(pyridoxal phosphate)lysine is present on Lys239. 363-365 contributes to the (6S)-5,6,7,8-tetrahydrofolate binding site; sequence TPF.

The protein belongs to the SHMT family. In terms of assembly, homodimer. Pyridoxal 5'-phosphate is required as a cofactor.

The protein resides in the cytoplasm. It carries out the reaction (6R)-5,10-methylene-5,6,7,8-tetrahydrofolate + glycine + H2O = (6S)-5,6,7,8-tetrahydrofolate + L-serine. The protein operates within one-carbon metabolism; tetrahydrofolate interconversion. It functions in the pathway amino-acid biosynthesis; glycine biosynthesis; glycine from L-serine: step 1/1. Its function is as follows. Catalyzes the reversible interconversion of serine and glycine with tetrahydrofolate (THF) serving as the one-carbon carrier. This reaction serves as the major source of one-carbon groups required for the biosynthesis of purines, thymidylate, methionine, and other important biomolecules. Also exhibits THF-independent aldolase activity toward beta-hydroxyamino acids, producing glycine and aldehydes, via a retro-aldol mechanism. The polypeptide is Serine hydroxymethyltransferase (Bartonella henselae (strain ATCC 49882 / DSM 28221 / CCUG 30454 / Houston 1) (Rochalimaea henselae)).